We begin with the raw amino-acid sequence, 596 residues long: Probable protein S-acyltransferase 22 (596 aa).

2 helical membrane passes run 15-35 (VVAV…FAPF) and 44-64 (IAMG…IWCA). The disordered stretch occupies residues 102-125 (TGGAKSHDGTCVEDTENGSNKKLE). A DHHC domain is found at 163–213 (FYCSLCEVEVFKYSKHCRVCDKCVDRFDHHCRWLNNCIGKRNYRKFFSLMV). Residue Cys193 is the S-palmitoyl cysteine intermediate of the active site. The next 2 membrane-spanning stretches (helical) occupy residues 215-235 (AIFL…LCLL) and 254-274 (LIPF…ATLP). Disordered stretches follow at residues 433 to 455 (SGRR…RRQS), 498 to 523 (QTSR…DSHD), and 549 to 596 (MGQQ…HKSR). The segment covering 498–518 (QTSRAMSGSGNVMVTSSPESS) has biased composition (polar residues). The span at 549 to 571 (MGQQRGQQQQQQLSMMMMPLSRS) shows a compositional bias: low complexity.

It belongs to the DHHC palmitoyltransferase family.

It is found in the cell membrane. The protein localises to the cytoplasmic vesicle membrane. It catalyses the reaction L-cysteinyl-[protein] + hexadecanoyl-CoA = S-hexadecanoyl-L-cysteinyl-[protein] + CoA. In terms of biological role, palmitoyl acyltransferase. This chain is Probable protein S-acyltransferase 22 (PAT22), found in Arabidopsis thaliana (Mouse-ear cress).